Here is a 332-residue protein sequence, read N- to C-terminus: RING-H2 finger protein ATL81 (332 aa).

The N-terminal stretch at 1–19 (MYDLTFLLISLFPIDITLP) is a signal peptide. A helical transmembrane segment spans residues 76–96 (IVLTGSLLFIIFTGFFSFFFC). The RING-type; atypical zinc finger occupies 154–196 (CSICLTEFMDDDTIRLISTCNHSFHTICIDLWFEGHKTCPVCR).

The protein belongs to the RING-type zinc finger family. ATL subfamily.

The protein resides in the membrane. It catalyses the reaction S-ubiquitinyl-[E2 ubiquitin-conjugating enzyme]-L-cysteine + [acceptor protein]-L-lysine = [E2 ubiquitin-conjugating enzyme]-L-cysteine + N(6)-ubiquitinyl-[acceptor protein]-L-lysine.. It functions in the pathway protein modification; protein ubiquitination. This Arabidopsis thaliana (Mouse-ear cress) protein is RING-H2 finger protein ATL81 (ATL81).